The following is a 2227-amino-acid chain: Genome polyprotein (2227 aa).

Short sequence motifs ((L)YPX(n)L motif) lie at residues 167–171 and 200–205; these read YPHGL and YPVWEL. The tract at residues 766 to 836 is involved in P1-2A pentamerization; sequence MMSRIAAGDL…PRKMKGVFSQ (71 aa). The chain crosses the membrane as a helical span at residues 1011-1031; that stretch reads TVEIINTVLCFVKSGILLYVI. The membrane-penetrating ability stretch occupies residues 1043–1070; sequence IGLLRVMNYVDIGCSVISCGKVFSKMLE. Positions 1127 to 1155 form a coiled coil; sequence KKKDVLNILKDNRQKIEKAIEEADNLCIL. Residues 1204–1366 form the SF3 helicase domain; sequence HQKLKNLGSI…SFFKNPHNDM (163 aa). An ATP-binding site is contributed by 1230–1237; that stretch reads GKRGGGKS. A helical membrane pass occupies residues 1462-1482; the sequence is WVAVGAAVGILGVLVAGWFVY. Y1499 is modified (O-(5'-phospho-RNA)-tyrosine). One can recognise a Peptidase C3 domain in the interval 1514 to 1728; the sequence is DPVESQSPLE…VAKLVTQEMF (215 aa). Catalysis depends on for protease 3C activity residues H1563, D1603, and C1691. Residues 1976–2097 enclose the RdRp catalytic domain; the sequence is DVGLDLDFSA…VFSRDVQIDN (122 aa).

This sequence belongs to the picornaviridae polyprotein family. Homodimer. Homomultimer; probably interacts with membranes in a multimeric form. Seems to assemble into amyloid-like fibers. In terms of assembly, homodimer. Monomer. Interacts with protein 3CD. As to quaternary structure, interacts with host ACBD3. Interacts with protein 3AB. In terms of assembly, interacts with human MAVS. As to quaternary structure, homodimer; disulfide-linked. Homopentamer. Homooligomer. In terms of assembly, interacts with capsid protein VP2. Interacts with capsid protein VP3. As to quaternary structure, interacts with capsid protein VP1. Interacts with capsid protein VP3. Interacts with capsid protein VP1. Interacts with capsid protein VP2. Post-translationally, specific enzymatic cleavages by viral protease in vivo yield a variety of precursors and mature proteins. Polyprotein processing intermediates are produced, such as P1-2A which is a functional precursor of the structural proteins, VP0 which is a VP4-VP2 precursor, VP1-2A precursor, 3ABC precursor which is a stable and catalytically active precursor of 3A, 3B and 3C proteins, 3AB and 3CD precursors. The assembly signal 2A is removed from VP1-2A by a host protease, possibly host Cathepsin L. This cleavage occurs over a region of 3 amino-acids probably generating VP1 proteins with heterogeneous C-termini. In terms of processing, during virion maturation, immature virions are rendered infectious following cleavage of VP0 into VP4 and VP2. This maturation seems to be an autocatalytic event triggered by the presence of RNA in the capsid and is followed by a conformational change of the particle. The assembly signal 2A is removed from VP1-2A by a host protease, possibly host Cathepsin L in naked virions. This cleavage does not occur in enveloped virions. This cleavage occurs over a region of 3 amino-acids probably generating VP1 proteins with heterogeneous C-termini. Post-translationally, VPg is uridylylated prior to priming replication into VPg-pUpU. In terms of processing, unlike other picornaviruses, does not seem to be myristoylated.

The protein resides in the virion. Its subcellular location is the host endosome. It localises to the host multivesicular body. It is found in the host membrane. The protein localises to the host mitochondrion outer membrane. The protein resides in the host cytoplasm. Its subcellular location is the host cytoplasmic vesicle membrane. The catalysed reaction is RNA(n) + a ribonucleoside 5'-triphosphate = RNA(n+1) + diphosphate. The enzyme catalyses a ribonucleoside 5'-triphosphate + H2O = a ribonucleoside 5'-diphosphate + phosphate + H(+). It catalyses the reaction Selective cleavage of Gln-|-Gly bond in the poliovirus polyprotein. In other picornavirus reactions Glu may be substituted for Gln, and Ser or Thr for Gly.. Its function is as follows. Capsid proteins VP1, VP2, and VP3 form a closed capsid enclosing the viral positive strand RNA genome. All these proteins contain a beta-sheet structure called beta-barrel jelly roll. Together they form an icosahedral capsid (T=3) composed of 60 copies of each VP1, VP2, and VP3, with a diameter of approximately 300 Angstroms. VP1 is situated at the 12 fivefold axes, whereas VP2 and VP3 are located at the quasi-sixfold axes. The naked capsid interacts with the host receptor HAVCR1 to provide virion attachment to and probably entry into the target cell. Functionally, VP0 precursor is a component of the immature procapsids. In terms of biological role, plays a role in the assembly of the 12 pentamers into an icosahedral structure. Has not been detected in mature virions, supposedly owing to its small size. Precursor component of immature procapsids that corresponds to an extended form of the structural protein VP1. After maturation, possibly by the host Cathepsin L, the assembly signal 2A is cleaved to give rise to the mature VP1 protein. Its function is as follows. Functions as a viroporin. Affects membrane integrity and causes an increase in membrane permeability. Involved in host intracellular membrane rearrangements probably to give rise to the viral factories. Does not disrupt calcium homeostasis or glycoprotein trafficking. Antagonizes the innate immune response of the host by suppressing IFN-beta synthesis, which it achieves by interfering with the RIG-I/IFIH1 pathway. Functionally, affects membrane integrity and causes an increase in membrane permeability. In terms of biological role, associates with and induces structural rearrangements of intracellular membranes. Displays RNA-binding activity. The precursor 3ABC is targeted to the mitochondrial membrane where protease 3C activity cleaves and inhibits the host antiviral protein MAVS, thereby disrupting activation of IRF3 through the IFIH1/MDA5 pathway. In vivo, the protease activity of 3ABC precursor is more efficient in cleaving the 2BC precursor than that of protein 3C. The 3ABC precursor may therefore play a role in the proteolytic processing of the polyprotein. Possible viroporin. Its function is as follows. Interacts with the 3CD precursor and with RNA structures found at both the 5'- and 3'-termini of the viral genome. Since the 3AB precursor contains the hydrophobic domain 3A, it probably anchors the whole viral replicase complex to intracellular membranes on which viral RNA synthesis occurs. Functionally, may serve as membrane anchor to the 3AB and 3ABC precursors via its hydrophobic domain. May interact with RNA. In terms of biological role, acts as a primer for viral RNA replication and remains covalently bound to viral genomic RNA. VPg is uridylylated prior to priming replication into VPg-pUpU. The VPg-pUpU is then used as primer on the genomic RNA poly(A) by the RNA-dependent RNA polymerase to replicate the viral genome. Cysteine protease that generates mature viral proteins from the precursor polyprotein. In addition to its proteolytic activity, it binds to viral RNA, and thus influences viral genome replication. RNA and substrate bind cooperatively to the protease. Cleaves IKBKG/NEMO to impair innate immune signaling. Cleaves host PABPC1 which may participate in the switch of viral translation to RNA synthesis. Its function is as follows. Interacts with the 3AB precursor and with RNA structures found at both the 5'- and 3'-termini of the viral genome. Disrupts TLR3 signaling by degrading the host adapter protein TICAM1/TRIF. Functionally, RNA-directed RNA polymerase 3D-POL replicates genomic and antigenomic RNA by recognizing replications specific signals. The sequence is that of Genome polyprotein from Homo sapiens (Human).